A 619-amino-acid chain; its full sequence is Zinc finger and BTB domain-containing protein 7C (619 aa).

Residues 34 to 101 (CDVLLVVQEQ…AYTSTLTITA (68 aa)) enclose the BTB domain. The interval 129–218 (PGGDGGEEDD…DSFQAGSPGH (90 aa)) is disordered. Residues 133-173 (GGEEDDKEDDDDDEDDDDEEDEEEEEEEEEDDDDDTEDFAD) are compositionally biased toward acidic residues. The segment covering 191–208 (KTDHLTEKAYSDTPRDFP) has biased composition (basic and acidic residues). 3 C2H2-type zinc fingers span residues 364–386 (QQCP…MRTH), 392–414 (YMCT…MRKH), and 420–442 (YLCI…MRIH). The C2H2-type 4; degenerate zinc finger occupies 448–478 (YQCEFCYKSFTRSDHLHRHIKRQSCRMARPR).

Detected in normal cervical keratinocytes, and in some cervical carcinoma cell lines.

Functionally, may be a tumor suppressor gene. This Homo sapiens (Human) protein is Zinc finger and BTB domain-containing protein 7C (ZBTB7C).